Consider the following 238-residue polypeptide: Ribonuclease PH (238 aa).

Residues Arg86 and 124 to 126 (GTR) contribute to the phosphate site.

This sequence belongs to the RNase PH family. As to quaternary structure, homohexameric ring arranged as a trimer of dimers.

It catalyses the reaction tRNA(n+1) + phosphate = tRNA(n) + a ribonucleoside 5'-diphosphate. Functionally, phosphorolytic 3'-5' exoribonuclease that plays an important role in tRNA 3'-end maturation. Removes nucleotide residues following the 3'-CCA terminus of tRNAs; can also add nucleotides to the ends of RNA molecules by using nucleoside diphosphates as substrates, but this may not be physiologically important. Probably plays a role in initiation of 16S rRNA degradation (leading to ribosome degradation) during starvation. The chain is Ribonuclease PH from Edwardsiella ictaluri (strain 93-146).